A 20-amino-acid polypeptide reads, in one-letter code: Thrombin-like enzyme Cdc SII (20 aa).

This sequence belongs to the peptidase S1 family. Snake venom subfamily. Monomer. In terms of tissue distribution, expressed by the venom gland.

The protein resides in the secreted. Strongly inhibited by PMSF and moderately inhibited by leupeptin. Not inhibited by EDTA, aprotinin, pepstatin, and bestatin. Functionally, thrombin-like snake venom serine protease that coagulates human plasma and bovine fibrinogen by hydrolysis of the alpha chains (FGA) (minimum coagulation dose is 60 ug on fibrinogen). Has fibrinogenolytic activities, and degrades preferentially the Aalpha chain (FGA). Shows amidolytic activity toward N-benzoyl-L-Arg-p-nitroanilide, has a higher activity than Cdc SI. In vivo, intravenous injection induces defibrin(ogen)ation and a loss of the righting reflex and opisthotoxins, together with a typical gyroxin-like effect (18-20 minutes). Subcutaneous injection into the footpads induces moderate edema. Potentiates local hemorrhagic activity induced by metalloproteinases (BaP1). The protein is Thrombin-like enzyme Cdc SII of Crotalus durissus cumanensis (South American rattlesnake).